Consider the following 306-residue polypeptide: Protein FdhE homolog (306 aa).

This sequence belongs to the FdhE family.

The protein localises to the cytoplasm. Functionally, necessary for formate dehydrogenase activity. The polypeptide is Protein FdhE homolog (Glaesserella parasuis serovar 5 (strain SH0165) (Haemophilus parasuis)).